The sequence spans 551 residues: RanBD1 domain-containing protein C584.03c (551 aa).

Positions 1–309 constitute a RanBD1 domain; sequence MDELLNVASH…LLLKYADDET (309 aa). The residue at position 441 (serine 441) is a Phosphoserine. Residues 522–551 are disordered; it reads SVIPHSEPESSSKVINCQAKLNVEKEKKNP.

The protein localises to the nucleus. This is RanBD1 domain-containing protein C584.03c from Schizosaccharomyces pombe (strain 972 / ATCC 24843) (Fission yeast).